A 249-amino-acid polypeptide reads, in one-letter code: MTHQPQQSPQFFLTAPSPCPYLEGQQERKVFTHLVGDKANEINDLLTQGGFRRSQNIAYRPACEVCRACISVRILAGEFEMTRNMRRVWSQNRDLIGRVHKAQPSTEQYALFRDYLDARHRSGGMSDMTVLDYAMMIEDTHVNTQIIEYRRRGPDSFMSAKGDGELIAVALTDVMADGLSMVYSFFSPHMQERSLGTYMILDHIEWARAAGLPHVYLGYWVEGSRKMQYKIRFTPQEHLGPRGWQRFEG.

The protein belongs to the R-transferase family. Bpt subfamily.

Its subcellular location is the cytoplasm. The enzyme catalyses N-terminal L-glutamyl-[protein] + L-leucyl-tRNA(Leu) = N-terminal L-leucyl-L-glutamyl-[protein] + tRNA(Leu) + H(+). It catalyses the reaction N-terminal L-aspartyl-[protein] + L-leucyl-tRNA(Leu) = N-terminal L-leucyl-L-aspartyl-[protein] + tRNA(Leu) + H(+). Functions in the N-end rule pathway of protein degradation where it conjugates Leu from its aminoacyl-tRNA to the N-termini of proteins containing an N-terminal aspartate or glutamate. The protein is Aspartate/glutamate leucyltransferase of Brucella suis (strain ATCC 23445 / NCTC 10510).